The primary structure comprises 396 residues: Elongation factor Tu (396 aa).

The tr-type G domain occupies 10 to 206 (KPHVNVGTIG…ALDNYIPLPE (197 aa)). Positions 19–26 (GHVDHGKT) are G1. 19-26 (GHVDHGKT) contacts GTP. Threonine 26 contributes to the Mg(2+) binding site. The segment at 60 to 64 (GITIN) is G2. The segment at 81–84 (DCPG) is G3. Residues 81 to 85 (DCPGH) and 136 to 139 (NKCD) contribute to the GTP site. The interval 136–139 (NKCD) is G4. The G5 stretch occupies residues 174-176 (SAK).

The protein belongs to the TRAFAC class translation factor GTPase superfamily. Classic translation factor GTPase family. EF-Tu/EF-1A subfamily. As to quaternary structure, monomer.

The protein resides in the cytoplasm. The enzyme catalyses GTP + H2O = GDP + phosphate + H(+). Its function is as follows. GTP hydrolase that promotes the GTP-dependent binding of aminoacyl-tRNA to the A-site of ribosomes during protein biosynthesis. The protein is Elongation factor Tu of Polaromonas naphthalenivorans (strain CJ2).